The following is a 37-amino-acid chain: Large ribosomal subunit protein bL36 (37 aa).

This sequence belongs to the bacterial ribosomal protein bL36 family.

The protein is Large ribosomal subunit protein bL36 of Nitrosococcus oceani (strain ATCC 19707 / BCRC 17464 / JCM 30415 / NCIMB 11848 / C-107).